The chain runs to 180 residues: Threonylcarbamoyl-AMP synthase (180 aa).

Positions 1-180 constitute a YrdC-like domain; it reads MRARALQHFL…DLITGAIVRP (180 aa).

This sequence belongs to the SUA5 family. TsaC subfamily.

It localises to the cytoplasm. It catalyses the reaction L-threonine + hydrogencarbonate + ATP = L-threonylcarbamoyladenylate + diphosphate + H2O. Required for the formation of a threonylcarbamoyl group on adenosine at position 37 (t(6)A37) in tRNAs that read codons beginning with adenine. Catalyzes the conversion of L-threonine, HCO(3)(-)/CO(2) and ATP to give threonylcarbamoyl-AMP (TC-AMP) as the acyladenylate intermediate, with the release of diphosphate. This chain is Threonylcarbamoyl-AMP synthase, found in Methylobacillus flagellatus (strain ATCC 51484 / DSM 6875 / VKM B-1610 / KT).